The following is a 73-amino-acid chain: NAD(P)H-quinone oxidoreductase subunit L (73 aa).

2 consecutive transmembrane segments (helical) span residues 6 to 26 and 44 to 64; these read SLIGLTYAGLAVLYLLVLPLL and VLMFFLVLFFFPGMVLLAPFM.

Belongs to the complex I NdhL subunit family. As to quaternary structure, NDH-1 can be composed of about 15 different subunits; different subcomplexes with different compositions have been identified which probably have different functions.

It localises to the cellular thylakoid membrane. The catalysed reaction is a plastoquinone + NADH + (n+1) H(+)(in) = a plastoquinol + NAD(+) + n H(+)(out). The enzyme catalyses a plastoquinone + NADPH + (n+1) H(+)(in) = a plastoquinol + NADP(+) + n H(+)(out). NDH-1 shuttles electrons from an unknown electron donor, via FMN and iron-sulfur (Fe-S) centers, to quinones in the respiratory and/or the photosynthetic chain. The immediate electron acceptor for the enzyme in this species is believed to be plastoquinone. Couples the redox reaction to proton translocation, and thus conserves the redox energy in a proton gradient. Cyanobacterial NDH-1 also plays a role in inorganic carbon-concentration. This chain is NAD(P)H-quinone oxidoreductase subunit L, found in Synechococcus sp. (strain JA-2-3B'a(2-13)) (Cyanobacteria bacterium Yellowstone B-Prime).